Consider the following 312-residue polypeptide: Malate dehydrogenase (312 aa).

Residues 12-17 and D36 contribute to the NAD(+) site; that span reads GAGFTG. Positions 87 and 93 each coordinate substrate. NAD(+) is bound by residues N100 and 123 to 125; that span reads LTN. Substrate is bound at residue N125. S149 carries the post-translational modification Phosphoserine. Residue R156 participates in substrate binding. Catalysis depends on H180, which acts as the Proton acceptor.

It belongs to the LDH/MDH superfamily. MDH type 3 family. Homotetramer.

It catalyses the reaction (S)-malate + NAD(+) = oxaloacetate + NADH + H(+). Functionally, catalyzes the reversible oxidation of malate to oxaloacetate. The chain is Malate dehydrogenase from Bacillus israeli.